Reading from the N-terminus, the 492-residue chain is Catalase isozyme 2 (492 aa).

Active-site residues include His-65 and Asn-138. Position 348 (Tyr-348) interacts with heme.

It belongs to the catalase family. Homotetramer. The cofactor is heme.

The protein resides in the peroxisome. It catalyses the reaction 2 H2O2 = O2 + 2 H2O. In terms of biological role, occurs in almost all aerobically respiring organisms and serves to protect cells from the toxic effects of hydrogen peroxide. The sequence is that of Catalase isozyme 2 (CAT2) from Solanum lycopersicum (Tomato).